We begin with the raw amino-acid sequence, 224 residues long: Biosynthetic peptidoglycan transglycosylase (224 aa).

A helical membrane pass occupies residues 12-32 (ILVVLAILPVFLLLVYSLPFV).

Belongs to the glycosyltransferase 51 family.

The protein resides in the cell inner membrane. The enzyme catalyses [GlcNAc-(1-&gt;4)-Mur2Ac(oyl-L-Ala-gamma-D-Glu-L-Lys-D-Ala-D-Ala)](n)-di-trans,octa-cis-undecaprenyl diphosphate + beta-D-GlcNAc-(1-&gt;4)-Mur2Ac(oyl-L-Ala-gamma-D-Glu-L-Lys-D-Ala-D-Ala)-di-trans,octa-cis-undecaprenyl diphosphate = [GlcNAc-(1-&gt;4)-Mur2Ac(oyl-L-Ala-gamma-D-Glu-L-Lys-D-Ala-D-Ala)](n+1)-di-trans,octa-cis-undecaprenyl diphosphate + di-trans,octa-cis-undecaprenyl diphosphate + H(+). Its pathway is cell wall biogenesis; peptidoglycan biosynthesis. In terms of biological role, peptidoglycan polymerase that catalyzes glycan chain elongation from lipid-linked precursors. In Brucella melitensis biotype 1 (strain ATCC 23456 / CCUG 17765 / NCTC 10094 / 16M), this protein is Biosynthetic peptidoglycan transglycosylase.